A 257-amino-acid chain; its full sequence is Glucose-1-phosphate cytidylyltransferase (257 aa).

Substrate contacts are provided by residues 6-10, 11-13, Lys-23, Ser-104, Arg-109, and Gly-128; these read LAGGL and GTR. Mg(2+) contacts are provided by Asp-129 and Asp-234.

This sequence belongs to the glucose-1-phosphate cytidylyltransferase family. As to quaternary structure, homohexamer. Requires Mg(2+) as cofactor.

The enzyme catalyses alpha-D-glucose 1-phosphate + CTP + H(+) = CDP-D-glucose + diphosphate. It participates in nucleotide-sugar biosynthesis; CDP-3,6-dideoxy-D-mannose biosynthesis; CDP-3,6-dideoxy-D-mannose from CTP and alpha-D-glucose 1-phosphate: step 1/5. The protein operates within bacterial outer membrane biogenesis; LPS O-antigen biosynthesis. In terms of biological role, involved in the biosynthesis of the tyvelose, a 3,6-dideoxyhexose found in the O-antigen of the surface lipopolysaccharides. It catalyzes the transfer of a CMP moiety from CTP to glucose 1-phosphate. This Salmonella typhimurium (strain LT2 / SGSC1412 / ATCC 700720) protein is Glucose-1-phosphate cytidylyltransferase (rfbF).